We begin with the raw amino-acid sequence, 623 residues long: Serine/threonine-protein kinase nrc-2 (623 aa).

Residues 1–215 (MPSTKNANGE…GLGALPPPIR (215 aa)) are disordered. 2 stretches are compositionally biased toward basic and acidic residues: residues 27 to 36 (SKDHKDRDAH) and 170 to 180 (LSKEPLEESKD). Positions 199–209 (LAAPDADGLGA) are enriched in low complexity. The 291-residue stretch at 242-532 (FDKIKLIGKG…ASDIKTHPFF (291 aa)) folds into the Protein kinase domain. ATP-binding positions include 248 to 256 (IGKGDVGKV) and K271. D367 (proton acceptor) is an active-site residue. The tract at residues 569 to 596 (VDISGSRQMGLKGEPLESGMVTPGENAV) is disordered.

Belongs to the protein kinase superfamily. Ser/Thr protein kinase family. KIN82 subfamily.

The enzyme catalyses L-seryl-[protein] + ATP = O-phospho-L-seryl-[protein] + ADP + H(+). It catalyses the reaction L-threonyl-[protein] + ATP = O-phospho-L-threonyl-[protein] + ADP + H(+). Controls entry of the cell into the asexual developmental program. Required to repress entry into the conidiation program. The chain is Serine/threonine-protein kinase nrc-2 (nrc-2) from Neurospora crassa (strain ATCC 24698 / 74-OR23-1A / CBS 708.71 / DSM 1257 / FGSC 987).